Reading from the N-terminus, the 103-residue chain is Large ribosomal subunit protein bL21 (103 aa).

This sequence belongs to the bacterial ribosomal protein bL21 family. As to quaternary structure, part of the 50S ribosomal subunit. Contacts protein L20.

In terms of biological role, this protein binds to 23S rRNA in the presence of protein L20. This is Large ribosomal subunit protein bL21 from Actinobacillus pleuropneumoniae serotype 5b (strain L20).